Reading from the N-terminus, the 119-residue chain is Large ribosomal subunit protein bL20 (119 aa).

The protein belongs to the bacterial ribosomal protein bL20 family.

Binds directly to 23S ribosomal RNA and is necessary for the in vitro assembly process of the 50S ribosomal subunit. It is not involved in the protein synthesizing functions of that subunit. The polypeptide is Large ribosomal subunit protein bL20 (Paracoccus denitrificans (strain Pd 1222)).